The following is a 190-amino-acid chain: Female-specific histamine-binding protein 2 (190 aa).

The N-terminal stretch at 1 to 19 is a signal peptide; that stretch reads MKLLILSLALVLALSQVKG. Residues S39, D43, Y55, D58, W61, E101, F117, Y119, F127, D139, E154, and W156 each contribute to the histamine site. Intrachain disulfides connect C67–C188 and C138–C167.

It belongs to the calycin superfamily. Histamine-binding salivary protein family. In terms of assembly, monomer. Expressed in salivary glands.

The protein resides in the secreted. In terms of biological role, salivary tick protein that acts by scavenging histamine at the wound site, outcompeting histamine receptors for histamine, thereby overcoming host inflammatory responses. Binds histamine with a high-affinity (Kd=1.7 nM). Contains two binding histamine sites (H and L), that appear to bind histamine with differing affinities (high and low). This Rhipicephalus appendiculatus (Brown ear tick) protein is Female-specific histamine-binding protein 2.